Reading from the N-terminus, the 426-residue chain is MLDLKRIRNNPEEIKKQLLNRGEDFELSIIDKVVSLDEKRRKILVEVEALKNKRNQDSGEIAKIKRAGGNADTLVVEMKQVSDNIKQYDIQLSEINDKIEYIMLRIPNIPNPAVPEGKLDEDNVEIRRWMEPTKFKFQPKAHWDIGTNLNILDFERGGKVAGSRFTFYRGLGARLERAIVSYYLDFHTEKHGYEEILPPYMVNRTSMIGTGQLPKFEEDAFRVANNDFFLIPTAEVPVTNFYRNEVLKGEDLPIKYVAYSACFRAEAGSAGRDTRGIIRQHQFNKVELVKFAKPEQSYDELEKLTNDAEDVIKGLKIPYRVVKICKGDLGFTAALKYDIEVWMPSYNRYVEISSCSNFEDFQARRVNIKYKETPKDKPKYIHTLNGSGVAIGRTVAAILENYQQDDGSVLIPEILKPYMGGREVIK.

Residue 233–235 (TAE) participates in L-serine binding. 264–266 (RAE) is a binding site for ATP. Glu-287 contributes to the L-serine binding site. Position 351–354 (351–354 (EISS)) interacts with ATP. An L-serine-binding site is contributed by Ser-387.

The protein belongs to the class-II aminoacyl-tRNA synthetase family. Type-1 seryl-tRNA synthetase subfamily. In terms of assembly, homodimer. The tRNA molecule binds across the dimer.

The protein resides in the cytoplasm. The enzyme catalyses tRNA(Ser) + L-serine + ATP = L-seryl-tRNA(Ser) + AMP + diphosphate + H(+). It carries out the reaction tRNA(Sec) + L-serine + ATP = L-seryl-tRNA(Sec) + AMP + diphosphate + H(+). It functions in the pathway aminoacyl-tRNA biosynthesis; selenocysteinyl-tRNA(Sec) biosynthesis; L-seryl-tRNA(Sec) from L-serine and tRNA(Sec): step 1/1. Catalyzes the attachment of serine to tRNA(Ser). Is also able to aminoacylate tRNA(Sec) with serine, to form the misacylated tRNA L-seryl-tRNA(Sec), which will be further converted into selenocysteinyl-tRNA(Sec). The polypeptide is Serine--tRNA ligase (Clostridium kluyveri (strain NBRC 12016)).